The chain runs to 429 residues: Glutamate dehydrogenase B (429 aa).

The interval 1–20 (MAQTPPPESAPSTDSEPETA) is disordered. Lys119 is an active-site residue.

The protein belongs to the Glu/Leu/Phe/Val dehydrogenases family. Homohexamer.

This chain is Glutamate dehydrogenase B (gdhB), found in Halobacterium salinarum (strain ATCC 700922 / JCM 11081 / NRC-1) (Halobacterium halobium).